Here is a 1426-residue protein sequence, read N- to C-terminus: Homeobox protein cut-like 2 (1426 aa).

Residues 77–104 (PEPPSAREQNEGTCPTGHTPANGNHLPG) form a disordered region. The residue at position 81 (serine 81) is a Phosphoserine. Residues 131–311 (ITLAARLGEA…IKTELSILRA (181 aa)) are a coiled coil. Disordered stretches follow at residues 351 to 419 (ALLA…FPSL), 460 to 488 (KPPSAPAASVPCPEPTGAPEAVDGAGPEE), 599 to 628 (EIESQKGGESKNSPASVSIPNGTASSSTSE), 653 to 676 (ESGPRGRSVPPSPPERPSPATASQ), 743 to 769 (YASVSPSLSSSSSYSGQPNGRAWPRGD), and 904 to 977 (LGQG…SSSQ). A compositionally biased stretch (pro residues) spans 374–395 (PPYPPQLPPPPGPEDPLSPSPA). Low complexity-rich tracts occupy residues 397 to 408 (PLLGPSLGPDGP) and 460 to 470 (KPPSAPAASVP). Residues 482-569 (DGAGPEEEQL…VLALRTIQVR (88 aa)) constitute a DNA-binding region (CUT 1). Residues 587–655 (DAIKSILEQA…QQALLEMESG (69 aa)) adopt a coiled-coil conformation. Polar residues predominate over residues 608–628 (SKNSPASVSIPNGTASSSTSE). 3 stretches are compositionally biased toward low complexity: residues 743-757 (YASVSPSLSSSSSYS), 910-928 (QAPTQQPSASQASPTEPTS), and 965-976 (SSSLGGKPFSSS). Residues 828–915 (QYELYMYREV…QGQGQAPTQQ (88 aa)) constitute a DNA-binding region (CUT 2). The CUT 3 DNA-binding region spans 983–1070 (QEMVAMSPEL…VEKLRDMKKL (88 aa)). The segment at residues 1113-1172 (AKKPRVVLAPAEKEALRKAYQLEPYPSQQTIELLSFQLNLKTNTVINWFHNYRSRMRREM) is a DNA-binding region (homeobox). A disordered region spans residues 1177–1392 (TQDDPDFDPS…AALHPSTKVN (216 aa)). 2 stretches are compositionally biased toward basic and acidic residues: residues 1233 to 1245 (APDRALVKIKQEE) and 1260 to 1274 (DPDRGQDGPKEEHTH). The span at 1318-1332 (LSFKSTSESSCCSLE) shows a compositional bias: low complexity. The span at 1338-1350 (PSVISSPDLTTCV) shows a compositional bias: polar residues. A compositionally biased stretch (low complexity) spans 1351–1364 (SPAPSSSAPISPSL).

The protein belongs to the CUT homeobox family. As to expression, restricted to neural tissues. Expressed exclusively in the central and peripheral nervous systems.

Its subcellular location is the nucleus. In terms of biological role, transcription factor involved in the control of neuronal proliferation and differentiation in the brain. Regulates dendrite development and branching, dendritic spine formation, and synaptogenesis in cortical layers II-III. Binds to DNA in a sequence-specific manner. This Mus musculus (Mouse) protein is Homeobox protein cut-like 2 (Cux2).